The sequence spans 430 residues: Serine hydroxymethyltransferase (430 aa).

(6S)-5,6,7,8-tetrahydrofolate contacts are provided by residues Leu-123 and 127 to 129 (GHL). Lys-232 is modified (N6-(pyridoxal phosphate)lysine). Residue Glu-248 coordinates (6S)-5,6,7,8-tetrahydrofolate.

The protein belongs to the SHMT family. As to quaternary structure, homodimer. It depends on pyridoxal 5'-phosphate as a cofactor.

Its subcellular location is the cytoplasm. The catalysed reaction is (6R)-5,10-methylene-5,6,7,8-tetrahydrofolate + glycine + H2O = (6S)-5,6,7,8-tetrahydrofolate + L-serine. Its pathway is one-carbon metabolism; tetrahydrofolate interconversion. It functions in the pathway amino-acid biosynthesis; glycine biosynthesis; glycine from L-serine: step 1/1. Functionally, catalyzes the reversible interconversion of serine and glycine with tetrahydrofolate (THF) serving as the one-carbon carrier. This reaction serves as the major source of one-carbon groups required for the biosynthesis of purines, thymidylate, methionine, and other important biomolecules. Also exhibits THF-independent aldolase activity toward beta-hydroxyamino acids, producing glycine and aldehydes, via a retro-aldol mechanism. The polypeptide is Serine hydroxymethyltransferase (Anaplasma marginale (strain St. Maries)).